Here is a 374-residue protein sequence, read N- to C-terminus: Gustatory receptor 23a (374 aa).

The Cytoplasmic segment spans residues 1–6 (MFPPTR). A helical transmembrane segment spans residues 7–27 (VQASSRVVLKIFHFILVAFSL). Over 28 to 36 (RSRRLSRLV) the chain is Extracellular. Residues 37 to 57 (LWLQFLGWLTWFISMWTQSVI) traverse the membrane as a helical segment. Residues 58–72 (YAQTIDCTLDCSLRH) lie on the Cytoplasmic side of the membrane. Residues 73 to 93 (ILTFFQTVSHAFIVVTSFLDG) form a helical membrane-spanning segment. The Extracellular portion of the chain corresponds to 94–112 (FRIKQDQLDEPIAFEDSDP). The helical transmembrane segment at 113–133 (WLAFTVLAMLVPTLGVEYLVC) threads the bilayer. Topologically, residues 134–226 (SNAPEYAFRI…YNDLHYLFVR (93 aa)) are cytoplasmic. Residues 227–247 (INGYFGGSLLTIIIVHFAIFV) traverse the membrane as a helical segment. Over 248–263 (SNSYWLFVDIRTRPWR) the chain is Extracellular. The chain crosses the membrane as a helical span at residues 264 to 284 (IYAILLNLGFIFNVALQMAAA). The Cytoplasmic portion of the chain corresponds to 285-343 (CWHCQQSYNLGRQIGCLISKLVKPQGSKLYNDLVSEFSLQTLHQRFVVTAKDFFSLNLH). Residues 344–364 (LLSSMFAAVVTYLVILIQFMF) form a helical membrane-spanning segment. Residues 365–374 (AERSSTRGSG) are Extracellular-facing.

It belongs to the insect chemoreceptor superfamily. Gustatory receptor (GR) family. Gr2a subfamily. In terms of tissue distribution, expressed in the adult labellar chemosensory neurons and labral sense organ. Expressed in neurons of the dorsal pharyngeal sense organ of larvae.

The protein localises to the cell membrane. Its function is as follows. Probable gustatory receptor which mediates acceptance or avoidance behavior, depending on its substrates. The chain is Gustatory receptor 23a (Gr23a) from Drosophila melanogaster (Fruit fly).